The chain runs to 511 residues: Potassium voltage-gated channel subfamily A member 10 (511 aa).

Positions 22-50 are disordered; the sequence is IQEEPGYATDFDSTSPKGRPGGSSFSNGK. A helical transmembrane segment spans residues 218–238; the sequence is VAVVSVLVVVISITIFCLETL. The N-linked (GlcNAc...) asparagine glycan is linked to N256. Residues 271–292 traverse the membrane as a helical segment; the sequence is FFMVESTCIVWFTFELVLRFVV. The S-palmitoyl cysteine moiety is linked to residue C293. Residues 303–323 traverse the membrane as a helical segment; it reads IMNIIDIISIIPYFATLITEL. N334 carries N-linked (GlcNAc...) asparagine glycosylation. Residues 339–358 traverse the membrane as a helical; Voltage-sensor segment; it reads ILRIIRLVRVFRIFKLSRHS. Residues 375–395 form a helical membrane-spanning segment; sequence LGLLIFFLFIGVILFSSAVYF. Positions 421-426 match the Selectivity filter motif; that stretch reads TVGYGD. A helical transmembrane segment spans residues 436–456; sequence IVGTLCAIAGVLTIALPVPVI. The disordered stretch occupies residues 489 to 511; that stretch reads SRMGSTDSLNKTNGGCSTEKSRK. N-linked (GlcNAc...) asparagine glycosylation is present at N498.

Belongs to the potassium channel family. A (Shaker) (TC 1.A.1.2) subfamily. Kv1.8/KCNA10 sub-subfamily. In terms of assembly, homotetramer. Interacts with KCN4B/POMP. Interaction with KCN4B/POMP is necessary for the modulation of channel activity by cAMP. As to expression, detected in kidney, in proximal tubules, glomerular endothelium, in vascular endothelium and in smooth muscle cells.

Its subcellular location is the membrane. The enzyme catalyses K(+)(in) = K(+)(out). Its activity is regulated as follows. The channel activity is up-regulated by cAMP. In terms of biological role, voltage-gated potassium ion channel that mediates K(+) permeability of excitable membranes. When opened in response to the voltage difference across the membrane, KCNA10 channel selectively allows the flow of potassium ions across the membrane down their electrochemical gradient. This Homo sapiens (Human) protein is Potassium voltage-gated channel subfamily A member 10.